Here is a 196-residue protein sequence, read N- to C-terminus: GTP cyclohydrolase-2 (196 aa).

49-53 (RIHSE) lines the GTP pocket. Residues Cys54, Cys65, and Cys67 each coordinate Zn(2+). GTP-binding positions include Gln70, 92 to 94 (EGR), and Thr114. The active-site Proton acceptor is the Asp126. Arg128 functions as the Nucleophile in the catalytic mechanism. Residues Thr149 and Lys154 each contribute to the GTP site.

It belongs to the GTP cyclohydrolase II family. In terms of assembly, homodimer. The cofactor is Zn(2+).

The enzyme catalyses GTP + 4 H2O = 2,5-diamino-6-hydroxy-4-(5-phosphoribosylamino)-pyrimidine + formate + 2 phosphate + 3 H(+). Its pathway is cofactor biosynthesis; riboflavin biosynthesis; 5-amino-6-(D-ribitylamino)uracil from GTP: step 1/4. Catalyzes the conversion of GTP to 2,5-diamino-6-ribosylamino-4(3H)-pyrimidinone 5'-phosphate (DARP), formate and pyrophosphate. The polypeptide is GTP cyclohydrolase-2 (Hamiltonella defensa subsp. Acyrthosiphon pisum (strain 5AT)).